The following is a 215-amino-acid chain: Small ribosomal subunit protein uS7 (215 aa).

It belongs to the universal ribosomal protein uS7 family. As to quaternary structure, part of the 30S ribosomal subunit.

In terms of biological role, one of the primary rRNA binding proteins, it binds directly to 16S rRNA where it nucleates assembly of the head domain of the 30S subunit. Is located at the subunit interface close to the decoding center. This Pyrococcus furiosus (strain ATCC 43587 / DSM 3638 / JCM 8422 / Vc1) protein is Small ribosomal subunit protein uS7.